The chain runs to 596 residues: Thioredoxin reductase 1, mitochondrial (596 aa).

The tract at residues 59 to 87 is disordered; it reads LTGQRGSRDSTGATGGNAPAGSGAGAPPP. Over residues 68–79 the composition is skewed to low complexity; sequence STGATGGNAPAG. FAD is bound by residues 120-126, 143-147, 159-170, 233-235, 262-266, Ser-282, Phe-286, and Tyr-302; these read IGGGSAG, LDFVK, GGTCVNVGCIPK, GLG, and AVGGR. Cysteines 162 and 167 form a disulfide. NADP(+)-binding positions include 322–328 and Pro-355; that span reads VRSIVLR. FAD contacts are provided by residues 392–399, 429–432, 438–443, and Phe-472; these read RKGLVDDL, VGDI, and ELTPVA. His-569 acts as the Proton acceptor in catalysis. Pro-570 contacts FAD. Residues Cys-594 and Cys-595 are joined by a disulfide bond.

The protein belongs to the class-I pyridine nucleotide-disulfide oxidoreductase family. Homodimer. Requires FAD as cofactor. During embryogenesis, expression is seen in germ cell progenitors, developing midgut, hindgut and proventriculus.

It localises to the mitochondrion. It is found in the cytoplasm. The catalysed reaction is [thioredoxin]-dithiol + NADP(+) = [thioredoxin]-disulfide + NADPH + H(+). In terms of biological role, thioredoxin system is a major player in glutathione metabolism, due to the demonstrated absence of a glutathione reductase. Functionally interacts with the Sod/Cat reactive oxidation species (ROS) defense system and thereby has a role in preadult development and life span. Lack of a glutathione reductase suggests antioxidant defense in Drosophila, and probably in related insects, differs fundamentally from that in other organisms. In Drosophila melanogaster (Fruit fly), this protein is Thioredoxin reductase 1, mitochondrial.